We begin with the raw amino-acid sequence, 97 residues long: Co-chaperonin GroES (97 aa).

The protein belongs to the GroES chaperonin family. Heptamer of 7 subunits arranged in a ring. Interacts with the chaperonin GroEL.

The protein localises to the cytoplasm. In terms of biological role, together with the chaperonin GroEL, plays an essential role in assisting protein folding. The GroEL-GroES system forms a nano-cage that allows encapsulation of the non-native substrate proteins and provides a physical environment optimized to promote and accelerate protein folding. GroES binds to the apical surface of the GroEL ring, thereby capping the opening of the GroEL channel. In Gemmatimonas aurantiaca (strain DSM 14586 / JCM 11422 / NBRC 100505 / T-27), this protein is Co-chaperonin GroES.